A 450-amino-acid chain; its full sequence is Phosphoglucosamine mutase (450 aa).

The active-site Phosphoserine intermediate is the Ser102. 4 residues coordinate Mg(2+): Ser102, Asp244, Asp246, and Asp248. The residue at position 102 (Ser102) is a Phosphoserine.

This sequence belongs to the phosphohexose mutase family. It depends on Mg(2+) as a cofactor. Activated by phosphorylation.

The enzyme catalyses alpha-D-glucosamine 1-phosphate = D-glucosamine 6-phosphate. In terms of biological role, catalyzes the conversion of glucosamine-6-phosphate to glucosamine-1-phosphate. In Desulfovibrio desulfuricans (strain ATCC 27774 / DSM 6949 / MB), this protein is Phosphoglucosamine mutase.